The sequence spans 111 residues: T cell receptor alpha variable 18 (111 aa).

Residues 1 to 20 (MLSASCSGLVILLIFRRTSG) form the signal peptide. The Ig-like domain maps to 21–111 (DSVTQTEGPV…DSAVYYCALR (91 aa)). Residue Asn-41 is glycosylated (N-linked (GlcNAc...) asparagine). A disulfide bridge connects residues Cys-42 and Cys-108.

Alpha-beta TR is a heterodimer composed of an alpha and beta chain; disulfide-linked. The alpha-beta TR is associated with the transmembrane signaling CD3 coreceptor proteins to form the TR-CD3 (TcR or TCR). The assembly of alpha-beta TR heterodimers with CD3 occurs in the endoplasmic reticulum where a single alpha-beta TR heterodimer associates with one CD3D-CD3E heterodimer, one CD3G-CD3E heterodimer and one CD247 homodimer forming a stable octameric structure. CD3D-CD3E and CD3G-CD3E heterodimers preferentially associate with TR alpha and TR beta chains, respectively. The association of the CD247 homodimer is the last step of TcR assembly in the endoplasmic reticulum and is required for transport to the cell surface.

The protein localises to the cell membrane. V region of the variable domain of T cell receptor (TR) alpha chain that participates in the antigen recognition. Alpha-beta T cell receptors are antigen specific receptors which are essential to the immune response and are present on the cell surface of T lymphocytes. Recognize peptide-major histocompatibility (MH) (pMH) complexes that are displayed by antigen presenting cells (APC), a prerequisite for efficient T cell adaptive immunity against pathogens. Binding of alpha-beta TR to pMH complex initiates TR-CD3 clustering on the cell surface and intracellular activation of LCK that phosphorylates the ITAM motifs of CD3G, CD3D, CD3E and CD247 enabling the recruitment of ZAP70. In turn ZAP70 phosphorylates LAT, which recruits numerous signaling molecules to form the LAT signalosome. The LAT signalosome propagates signal branching to three major signaling pathways, the calcium, the mitogen-activated protein kinase (MAPK) kinase and the nuclear factor NF-kappa-B (NF-kB) pathways, leading to the mobilization of transcription factors that are critical for gene expression and essential for T cell growth and differentiation. The T cell repertoire is generated in the thymus, by V-(D)-J rearrangement. This repertoire is then shaped by intrathymic selection events to generate a peripheral T cell pool of self-MH restricted, non-autoaggressive T cells. Post-thymic interaction of alpha-beta TR with the pMH complexes shapes TR structural and functional avidity. This is T cell receptor alpha variable 18 from Homo sapiens (Human).